The chain runs to 347 residues: MFTHLDENQQPRMVDISQKVAGDRRAVAQCIVQLPKAIKDYLTGQEIFLKKGPVIQTAIIAGTMAVKKTADLIPFCHTLPIHGCKFDINIVYQKRDYLEIFLQCAVNTNYKTGVEMEALCGVSVAALTIYDMCKSISSEIIIKNTKLIEKTGGKADVSQTPLYGLVLTGGKSRRMGKDKALINYQGQPHGQYIYDLLAKYCEQVFLSARPSQWQGTPLENLPTLVDRGESVGPMSGILTALQSYPGVNWLIIACDLAYINSTMVEKLIAQARQDLVATCYENADQGFPEALCGFYTPLALQLFTKAQNIGLHCPVKILQMADCQLIKPDNLFDIANINSPEDYGQIN.

The interval 1 to 158 (MFTHLDENQQ…EKTGGKADVS (158 aa)) is molybdenum cofactor biosynthesis protein C. Residues 75-77 (FCH) and 116-117 (ME) each bind substrate. Asp131 (for MoaC activity) is an active-site residue. The molybdenum cofactor guanylyltransferase stretch occupies residues 159-347 (QTPLYGLVLT…NSPEDYGQIN (189 aa)). Residues 167–169 (LTG), Lys179, Asp226, and Asp255 contribute to the GTP site. Residue Asp255 participates in Mg(2+) binding.

In the N-terminal section; belongs to the MoaC family. The protein in the C-terminal section; belongs to the MobA family. Requires Mg(2+) as cofactor.

Its subcellular location is the cytoplasm. The catalysed reaction is Mo-molybdopterin + GTP + H(+) = Mo-molybdopterin guanine dinucleotide + diphosphate. The enzyme catalyses (8S)-3',8-cyclo-7,8-dihydroguanosine 5'-triphosphate = cyclic pyranopterin phosphate + diphosphate. The protein operates within cofactor biosynthesis; molybdopterin biosynthesis. Its function is as follows. Catalyzes the conversion of (8S)-3',8-cyclo-7,8-dihydroguanosine 5'-triphosphate to cyclic pyranopterin monophosphate (cPMP). In terms of biological role, transfers a GMP moiety from GTP to Mo-molybdopterin (Mo-MPT) cofactor (Moco or molybdenum cofactor) to form Mo-molybdopterin guanine dinucleotide (Mo-MGD) cofactor. This chain is Molybdenum cofactor biosynthesis bifunctional protein (moaC/mobA), found in Synechocystis sp. (strain ATCC 27184 / PCC 6803 / Kazusa).